A 407-amino-acid chain; its full sequence is D-3-phosphoglycerate dehydrogenase (407 aa).

NAD(+) contacts are provided by residues 161 to 162 (HI), Asp-181, 238 to 240 (ASR), and Asp-264. The active site involves Arg-240. The active site involves Glu-269. The active-site Proton donor is the His-292. Residue 292-295 (HIGG) participates in NAD(+) binding. Positions 340–407 (RILNIHNNKP…PNSIKTRVLY (68 aa)) constitute an ACT domain.

This sequence belongs to the D-isomer specific 2-hydroxyacid dehydrogenase family.

It catalyses the reaction (2R)-3-phosphoglycerate + NAD(+) = 3-phosphooxypyruvate + NADH + H(+). The catalysed reaction is (R)-2-hydroxyglutarate + NAD(+) = 2-oxoglutarate + NADH + H(+). It participates in amino-acid biosynthesis; L-serine biosynthesis; L-serine from 3-phospho-D-glycerate: step 1/3. Catalyzes the reversible oxidation of 3-phospho-D-glycerate to 3-phosphonooxypyruvate, the first step of the phosphorylated L-serine biosynthesis pathway. Also catalyzes the reversible oxidation of 2-hydroxyglutarate to 2-oxoglutarate. This chain is D-3-phosphoglycerate dehydrogenase (serA), found in Dictyostelium discoideum (Social amoeba).